The primary structure comprises 862 residues: Protein translocase subunit SecA (862 aa).

ATP-binding positions include glutamine 88, 106-110, and aspartate 506; that span reads GEGKT. Cysteine 839, cysteine 841, cysteine 850, and histidine 851 together coordinate Zn(2+).

This sequence belongs to the SecA family. In terms of assembly, monomer and homodimer. Part of the essential Sec protein translocation apparatus which comprises SecA, SecYEG and auxiliary proteins SecDF-YajC and YidC. Zn(2+) serves as cofactor.

Its subcellular location is the cell inner membrane. It localises to the cytoplasm. The enzyme catalyses ATP + H2O + cellular proteinSide 1 = ADP + phosphate + cellular proteinSide 2.. Its function is as follows. Part of the Sec protein translocase complex. Interacts with the SecYEG preprotein conducting channel. Has a central role in coupling the hydrolysis of ATP to the transfer of proteins into and across the cell membrane, serving as an ATP-driven molecular motor driving the stepwise translocation of polypeptide chains across the membrane. The polypeptide is Protein translocase subunit SecA (Campylobacter jejuni (strain RM1221)).